Consider the following 200-residue polypeptide: High mobility group protein B3 (200 aa).

Lys-3 bears the N6-acetyllysine mark. 2 DNA-binding regions (HMG box) span residues 9–79 and 93–161; these read PKGK…KDYG and PKRP…ADYK. Cys-23 is modified (cysteine sulfonic acid (-SO3H); alternate). Cys-23 and Cys-45 form a disulfide bridge. 2 positions are modified to N6-acetyllysine: Lys-30 and Lys-43. A Cysteine sulfonic acid (-SO3H); alternate modification is found at Cys-45. The segment at 71-97 is disordered; the sequence is YDREMKDYGPAKGGKKKKDPNAPKRPP. Residue Ser-98 is modified to Phosphoserine. Cys-104 is modified (cysteine sulfonic acid (-SO3H)). N6-acetyllysine is present on residues Lys-112 and Lys-139. Residues 161–200 are disordered; it reads KSKGKFDGAKGPAKVARKKVEEEEEEEEEEEEEEEEEEDE. Over residues 182–200 the composition is skewed to acidic residues; the sequence is EEEEEEEEEEEEEEEEEDE.

It belongs to the HMGB family. Reduction/oxidation of cysteine residues Cys-23, Cys-45 and Cys-104 and a possible intramolecular disulfide bond involving Cys-23 and Cys-45 give rise to different redox forms with specific functional activities in various cellular compartments: 1- fully reduced HMGB3 (HMGB3C23hC45hC104h), 2- disulfide HMGB3 (HMGB3C23-C45C104h) and 3- sulfonyl HMGB3 (HMGB3C23soC45soC104so). As to expression, expressed in bone marrow cells, specifically in primitive Lin-, c-kit+, Sca-1+, IL-7Ralpha- cells, and Ter119+ erythroid cells.

It is found in the nucleus. Its subcellular location is the chromosome. The protein localises to the cytoplasm. Multifunctional protein with various roles in different cellular compartments. May act in a redox sensitive manner. Associates with chromatin and binds DNA with a preference for non-canonical DNA structures such as single-stranded DNA. Can bend DNA and enhance DNA flexibility by looping thus providing a mechanism to promote activities on various gene promoters. Proposed to be involved in the innate immune response to nucleic acids by acting as a cytoplasmic promiscuous immunogenic DNA/RNA sensor. Negatively regulates B-cell and myeloid cell differentiation. In hematopoietic stem cells may regulate the balance between self-renewal and differentiation. Involved in negative regulation of canonical Wnt signaling. The sequence is that of High mobility group protein B3 (Hmgb3) from Mus musculus (Mouse).